The chain runs to 414 residues: Esterase FrsA (414 aa).

This sequence belongs to the FrsA family.

The catalysed reaction is a carboxylic ester + H2O = an alcohol + a carboxylate + H(+). Catalyzes the hydrolysis of esters. This chain is Esterase FrsA, found in Salmonella dublin (strain CT_02021853).